Reading from the N-terminus, the 625-residue chain is Chaperone protein HtpG (625 aa).

The interval 1 to 337 is a; substrate-binding; sequence MSTNQETRGF…TNDLPLNVSR (337 aa). The interval 338-554 is b; that stretch reads EILQENKITA…NDEMTTQMAK (217 aa). Positions 555 to 625 are c; the sequence is LFAAMGQKAP…FIKRMNKLLG (71 aa).

This sequence belongs to the heat shock protein 90 family. Homodimer.

It is found in the cytoplasm. Molecular chaperone. Has ATPase activity. This chain is Chaperone protein HtpG, found in Actinobacillus pleuropneumoniae serotype 3 (strain JL03).